The following is a 428-amino-acid chain: 2,3-bisphosphoglycerate-independent phosphoglycerate mutase 2 (428 aa).

It belongs to the BPG-independent phosphoglycerate mutase family. A-PGAM subfamily.

The enzyme catalyses (2R)-2-phosphoglycerate = (2R)-3-phosphoglycerate. It participates in carbohydrate degradation; glycolysis; pyruvate from D-glyceraldehyde 3-phosphate: step 3/5. In terms of biological role, catalyzes the interconversion of 2-phosphoglycerate and 3-phosphoglycerate. This Methanocaldococcus jannaschii (strain ATCC 43067 / DSM 2661 / JAL-1 / JCM 10045 / NBRC 100440) (Methanococcus jannaschii) protein is 2,3-bisphosphoglycerate-independent phosphoglycerate mutase 2 (apgM2).